The chain runs to 618 residues: MIASLIRSRRRSRRCVVYSVFLFGFLALWGSFALALVFLSDMYIGEDQISTQKAIKPIARSNYHVVVGHYNGNLPEDKKRNLTSEELNANLYAPHDDWGEGGAGVSHLTPEQQKLADSTFAVNQFNLLVSDGISVRRSLPEIRKPSCRNMTYPDNLPTTSVIIVYHNEAYSTLLRTVWSVIDRSPKELLKEIILVDDFSDREFLRYPTLDTTLKPLPTDIKIIRSKERVGLIRARMMGAQEAQGDVLTFLDSHCECTKGWLEPLLTRIKLNRKAVPCPVIDIINDNTFQYQKGIEMFRGGFNWNLQFRWYGMPTAMAKQHLLDPTGPIESPTMAGGLFSINRNYFEELGEYDPGMDIWGGENLEMSFRIWQCGGRVEILPCSHVGHVFRKSSPHDFPGKSSGKVLNTNLLRVAEVWMDDWKHYFYKIAPQAHRMRSSIDVSERVELRKKLNCKSFKWYLQNVFQDHFLPTPLDRFGRMTSSSNSSVCLAWTLRSSGIKTASTADCLKIFHKTQLWLYTGDRRIRTDEHLCLSVVQLLHTTSDWKIQLKECAGFDTEYWDFKPKIGRFQNRKTGLCLASPDIFDPTKDEFNPPIVQKCRSSNDRQNWTITEMSWLPEHP.

The Cytoplasmic segment spans residues 1–16 (MIASLIRSRRRSRRCV). Residues 17 to 39 (VYSVFLFGFLALWGSFALALVFL) traverse the membrane as a helical; Signal-anchor for type II membrane protein segment. At 40–618 (SDMYIGEDQI…TEMSWLPEHP (579 aa)) the chain is on the lumenal side. N-linked (GlcNAc...) asparagine glycosylation is found at Asn81 and Asn149. 2 disulfides stabilise this stretch: Cys147–Cys381 and Cys372–Cys452. A catalytic subdomain A region spans residues 156–267 (LPTTSVIIVY…KGWLEPLLTR (112 aa)). Substrate-binding residues include Asp197 and Arg228. A Mn(2+)-binding site is contributed by Asp251. Residue Ser252 participates in substrate binding. Position 253 (His253) interacts with Mn(2+). The tract at residues 327–389 (PIESPTMAGG…PCSHVGHVFR (63 aa)) is catalytic subdomain B. Trp358 lines the substrate pocket. His386 serves as a coordination point for Mn(2+). Arg389 contacts substrate. The region spanning 474–609 (RFGRMTSSSN…SNDRQNWTIT (136 aa)) is the Ricin B-type lectin domain. Asn483 carries N-linked (GlcNAc...) asparagine glycosylation. 3 disulfide bridges follow: Cys487/Cys505, Cys530/Cys550, and Cys575/Cys597. The N-linked (GlcNAc...) asparagine glycan is linked to Asn605.

Belongs to the glycosyltransferase 2 family. GalNAc-T subfamily. Mn(2+) serves as cofactor.

Its subcellular location is the golgi apparatus membrane. Its pathway is protein modification; protein glycosylation. In terms of biological role, probable glycopeptide transferase involved in O-linked oligosaccharide biosynthesis. Glycopeptide transferases catalyze the transfer of an N-acetyl-D-galactosamine residue to an already glycosylated peptide. In contrast to other members of the family, it does not act as a peptide transferase that transfers GalNAc onto serine or threonine residue on peptides that have been tested. Some peptide transferase activity is however not excluded, considering that its appropriate peptide substrate may remain unidentified. This chain is Probable N-acetylgalactosaminyltransferase 6 (gly-6), found in Caenorhabditis elegans.